The primary structure comprises 179 residues: Inosine/xanthosine triphosphatase (179 aa).

Mg(2+) is bound at residue E71. Substrate is bound at residue 71–72; sequence EA.

The protein belongs to the YjjX NTPase family. In terms of assembly, homodimer. Mg(2+) serves as cofactor. It depends on Mn(2+) as a cofactor.

It carries out the reaction XTP + H2O = XDP + phosphate + H(+). It catalyses the reaction ITP + H2O = IDP + phosphate + H(+). Phosphatase that hydrolyzes non-canonical purine nucleotides such as XTP and ITP to their respective diphosphate derivatives. Probably excludes non-canonical purines from DNA/RNA precursor pool, thus preventing their incorporation into DNA/RNA and avoiding chromosomal lesions. This chain is Inosine/xanthosine triphosphatase, found in Shewanella sp. (strain MR-4).